The primary structure comprises 446 residues: Rhoptry surface protein CERLI1 (446 aa).

The C2 domain maps to 39–208; it reads KPIGQLYRLM…NQTKNNEKIE (170 aa). A PH domain is found at 252 to 363; it reads GYLLHSNFYI…ILVSNYKRER (112 aa).

It localises to the cytoplasmic vesicle. Its subcellular location is the secretory vesicle. The protein localises to the rhoptry membrane. Essential for merozoite invasion of host cells by controlling rhoptry secretion. Binds to phosphatidic acid (PA) and phosphatidylinositol 4,5-bisphosphate (PIP2) lipids and thus, likely contributes to the assembly of the machinery that docks or primes the rhoptry to the parasite cell membrane prior to the fusion with the host cell membrane. This chain is Rhoptry surface protein CERLI1, found in Plasmodium falciparum (isolate 3D7).